The following is a 104-amino-acid chain: MYAVIKTGGKQYKVSEGDVLRVEKLAGEAGASVEFDQVLMVGEGDDVKVGAPTVEGGKVTAEVLGQGRARKIEIQKFKRRKQYRRFAGHRQQFTEVKITGISAG.

It belongs to the bacterial ribosomal protein bL21 family. As to quaternary structure, part of the 50S ribosomal subunit. Contacts protein L20.

This protein binds to 23S rRNA in the presence of protein L20. The chain is Large ribosomal subunit protein bL21 from Alkalilimnicola ehrlichii (strain ATCC BAA-1101 / DSM 17681 / MLHE-1).